We begin with the raw amino-acid sequence, 400 residues long: Argininosuccinate synthase (400 aa).

ATP is bound at residue 9-17 (AYSGGLDTS). Tyrosine 87 is an L-citrulline binding site. Glycine 117 provides a ligand contact to ATP. 3 residues coordinate L-aspartate: threonine 119, asparagine 123, and aspartate 124. Position 123 (asparagine 123) interacts with L-citrulline. L-citrulline-binding residues include arginine 127, serine 176, serine 185, glutamate 261, and tyrosine 273.

This sequence belongs to the argininosuccinate synthase family. Type 1 subfamily. As to quaternary structure, homotetramer.

The protein localises to the cytoplasm. It carries out the reaction L-citrulline + L-aspartate + ATP = 2-(N(omega)-L-arginino)succinate + AMP + diphosphate + H(+). Its pathway is amino-acid biosynthesis; L-arginine biosynthesis; L-arginine from L-ornithine and carbamoyl phosphate: step 2/3. The sequence is that of Argininosuccinate synthase from Pelodictyon phaeoclathratiforme (strain DSM 5477 / BU-1).